We begin with the raw amino-acid sequence, 348 residues long: N-(sulfonatooxy)prop-2-enimidothioate sulfolyase (348 aa).

7 Kelch repeats span residues 1-33 (MARTLQGEWMKVEQKGGQVPAPRSSHGIAVIGD), 34-85 (KLYC…VAVG), 87-133 (KLYV…FHSM), 139-194 (HVYV…VVQG), 209-254 (KIPT…FAHA), 259-314 (YIII…ASTT), and 322-348 (GLLVHGGKLMTNERTDEMYFFAVNSST). Residues Glu46, Arg94, Thr129, Phe130, and Arg157 each coordinate a (Z)-N-(sulfonatooxy)alkanimidothioate. Residue Arg94 is the Proton donor of the active site. The Proton donor role is filled by Arg157. Catalysis depends on Glu220, which acts as the Proton acceptor. Glu266 is a Fe(2+) binding site. Residue Arg269 coordinates a (Z)-N-(sulfonatooxy)alkanimidothioate. Fe(2+)-binding residues include Asp270 and His274. Trp309 and Val310 together coordinate a (Z)-N-(sulfonatooxy)alkanimidothioate.

As to quaternary structure, homodimer. Requires Fe(2+) as cofactor. Expressed constitutively in roots, stems, leaves, flowers, siliques and seedlings.

The catalysed reaction is (Z)-N-(sulfonatooxy)prop-2-enimidothioate = allyl thiocyanate + sulfate. It catalyses the reaction (Z)-N-(sulfonatooxy)prop-2-enimidothioate = 2-(thiiran-2-yl)acetonitrile + sulfate. The enzyme catalyses (Z)-N-(sulfonatooxy)prop-2-enimidothioate = allyl isothiocyanate + sulfate. It carries out the reaction (Z)-phenyl-N-(sulfonatooxy)methanimidothioate = phenylacetonitrile + sulfur + sulfate. The catalysed reaction is glucoerucin + H2O = (Z)-4-methylsulfanylbutyl-N-(sulfonatooxy)methanimidothioate + D-glucose. It catalyses the reaction (Z)-4-methylsulfanylbutyl-N-(sulfonatooxy)methanimidothioate = 5-(methylsulfanyl)pentanenitrile + sulfur + sulfate + H(+). Its activity is regulated as follows. Stimulated by the presence of Fe(2+) leading to an increase formation of both thiocyanate and epithionitrile with allylglucosinolate as substrate in the presence of myrosinase. Repressed by EDTA. Its function is as follows. Specifier protein that contributes to constitutive and herbivore-induced simple nitrile formation. Catalyzes allylthiocyanate and corresponding epithionitrile formation from allylglucosinolate in the presence of myrosinase. Also converts aliphatic glucosinolates, such as indol-3-ylmethylglucosinolate, 4-methylsulfinylbutylglucosinolate, 4-methylthiobutyl- and benzylisothiocyanate, to simple nitriles. The sequence is that of N-(sulfonatooxy)prop-2-enimidothioate sulfolyase from Thlaspi arvense (Field penny-cress).